A 131-amino-acid polypeptide reads, in one-letter code: Fumarate reductase subunit C (131 aa).

The next 3 membrane-spanning stretches (helical) occupy residues 30 to 50, 63 to 83, and 109 to 129; these read EGTA…LFAL, FLQN…ALLH, and IIKS…FVAL.

Belongs to the FrdC family. As to quaternary structure, part of an enzyme complex containing four subunits: a flavoprotein (FrdA), an iron-sulfur protein (FrdB), and two hydrophobic anchor proteins (FrdC and FrdD).

The protein resides in the cell inner membrane. Functionally, two distinct, membrane-bound, FAD-containing enzymes are responsible for the catalysis of fumarate and succinate interconversion; fumarate reductase is used in anaerobic growth, and succinate dehydrogenase is used in aerobic growth. Anchors the catalytic components of the fumarate reductase complex to the cell inner membrane, binds quinones. This Shigella dysenteriae serotype 1 (strain Sd197) protein is Fumarate reductase subunit C.